Consider the following 394-residue polypeptide: Gap junction gamma-1 protein (394 aa).

Over 1–22 (MSWSFLTRLLEEIHNHSTFVGK) the chain is Cytoplasmic. The helical transmembrane segment at 23-45 (IWLSVLIVFRIVLTAVGGESIYY) threads the bilayer. Over 46 to 75 (DEQSKFVCNTEQPGCENVCYDAFAPLSHVR) the chain is Extracellular. The helical transmembrane segment at 76-95 (FWVFQIILVATPSVMYLGYA) threads the bilayer. Topologically, residues 96–176 (IHKIARMVEH…RRIREDGLMR (81 aa)) are cytoplasmic. A helical membrane pass occupies residues 177-199 (IYVLQLLVRATFEVGFLIGQYLL). The Extracellular segment spans residues 200 to 229 (YGFEVSPVFVCSRKPCPHKIDCFISRPTEK). The helical transmembrane segment at 230–252 (TIFLLIMYGVSCMCLLLNVWEML) threads the bilayer. At 253–394 (HLGFGTIRDT…SGDGKNSVWI (142 aa)) the chain is on the cytoplasmic side. The disordered stretch occupies residues 354 to 394 (IQAYNNQNNPGSSSREKKSKAGSNKSSASSKSGDGKNSVWI). Polar residues predominate over residues 356 to 366 (AYNNQNNPGSS). Over residues 374 to 394 (AGSNKSSASSKSGDGKNSVWI) the composition is skewed to low complexity.

This sequence belongs to the connexin family. Gamma-type subfamily. A connexon is composed of a hexamer of connexins. Mostly in heart and stomach.

It localises to the cell membrane. The protein localises to the cell junction. It is found in the gap junction. Its function is as follows. One gap junction consists of a cluster of closely packed pairs of transmembrane channels, the connexons, through which materials of low MW diffuse from one cell to a neighboring cell. The protein is Gap junction gamma-1 protein (GJC1) of Gallus gallus (Chicken).